A 559-amino-acid chain; its full sequence is Suppressor of tumorigenicity 7 protein-like (559 aa).

The next 3 membrane-spanning stretches (helical) occupy residues 39–59 (GLAN…LYAL), 83–103 (FYVA…IFEW), and 513–533 (LPFF…IALL).

This sequence belongs to the ST7 family.

It localises to the membrane. This chain is Suppressor of tumorigenicity 7 protein-like (St7l), found in Rattus norvegicus (Rat).